A 236-amino-acid polypeptide reads, in one-letter code: Ribose-5-phosphate isomerase A (236 aa).

Substrate is bound by residues T31–T34, D84–D87, and K97–G100. Residue E106 is the Proton acceptor of the active site. K124 is a substrate binding site.

Belongs to the ribose 5-phosphate isomerase family. In terms of assembly, homodimer.

It carries out the reaction aldehydo-D-ribose 5-phosphate = D-ribulose 5-phosphate. The protein operates within carbohydrate degradation; pentose phosphate pathway; D-ribose 5-phosphate from D-ribulose 5-phosphate (non-oxidative stage): step 1/1. Functionally, catalyzes the reversible conversion of ribose-5-phosphate to ribulose 5-phosphate. In Polynucleobacter necessarius subsp. necessarius (strain STIR1), this protein is Ribose-5-phosphate isomerase A.